A 323-amino-acid polypeptide reads, in one-letter code: CYFIP-related Rac1 interactor A (323 aa).

It belongs to the CYRI family. As to quaternary structure, interacts with RAC1 (GTP-bound form preferentially).

The protein localises to the membrane. May negatively regulate RAC1 signaling and RAC1-driven cytoskeletal remodeling. May regulate chemotaxis, cell migration and epithelial polarization by controlling the polarity, plasticity, duration and extent of protrusions. The polypeptide is CYFIP-related Rac1 interactor A (CYRIA) (Bos taurus (Bovine)).